We begin with the raw amino-acid sequence, 543 residues long: MAKDIKFSADARAAMVRGVDMLADTVKVTLGPKGRNVVLEKAFGSPLITNDGVTIAKEIELEDHFENMGAKLVSEVASKTNDIAGDGTTTATVLTQAIVHEGLKNVTAGANPIGIRRGIETATATAVEALKAIAQPVSGKEAIAQVAAVSSRSEKVGEYISEAMERVGNDGVITIEESRGMETELEVVEGMQFDRGYLSQYMVTDNEKMVADLENPFILITDKKVSNIQDILPLLEEVLKTNRPLLIIADDVDGEALPTLVLNKIRGTFSVVAVKAPGFGDRRKAMLEDIAILTGGTVITEDLGLELKDATMTALGQAAKITVDKDSTVIVEGSGSSEAIANRIALIKSQLETTTSDFDREKLQERLAKLAGGVAVIKVGAPTETALKEMKLRIEDALNATRAAVEEGIVAGGGTALITVIEKVAALELEGDDATGRNIVLRALEEPVRQIALNAGYEGSVVIDKLKNSPAGTGFNAATGEWVDMIKTGIIDPVKVTRSALQNAASVASLILTTEAVVANKPEPAAPAPAMPAGMDPGMMGGF.

Residues T29 to P32, D86 to T90, G413, N476 to A478, and D492 each bind ATP.

This sequence belongs to the chaperonin (HSP60) family. Forms a cylinder of 14 subunits composed of two heptameric rings stacked back-to-back. Interacts with the co-chaperonin GroES.

The protein resides in the cytoplasm. It carries out the reaction ATP + H2O + a folded polypeptide = ADP + phosphate + an unfolded polypeptide.. In terms of biological role, together with its co-chaperonin GroES, plays an essential role in assisting protein folding. The GroEL-GroES system forms a nano-cage that allows encapsulation of the non-native substrate proteins and provides a physical environment optimized to promote and accelerate protein folding. In Streptococcus pyogenes serotype M49 (strain NZ131), this protein is Chaperonin GroEL.